A 298-amino-acid polypeptide reads, in one-letter code: N-acetylmuramic acid 6-phosphate etherase (298 aa).

One can recognise an SIS domain in the interval 55–218; sequence IHAQVSGGGR…STGLMIKSGK (164 aa). The Proton donor role is filled by Glu83. Glu114 is a catalytic residue.

Belongs to the GCKR-like family. MurNAc-6-P etherase subfamily. In terms of assembly, homodimer.

The enzyme catalyses N-acetyl-D-muramate 6-phosphate + H2O = N-acetyl-D-glucosamine 6-phosphate + (R)-lactate. It participates in amino-sugar metabolism; 1,6-anhydro-N-acetylmuramate degradation. The protein operates within amino-sugar metabolism; N-acetylmuramate degradation. Its pathway is cell wall biogenesis; peptidoglycan recycling. Specifically catalyzes the cleavage of the D-lactyl ether substituent of MurNAc 6-phosphate, producing GlcNAc 6-phosphate and D-lactate. Together with AnmK, is also required for the utilization of anhydro-N-acetylmuramic acid (anhMurNAc) either imported from the medium or derived from its own cell wall murein, and thus plays a role in cell wall recycling. The protein is N-acetylmuramic acid 6-phosphate etherase of Shigella sonnei (strain Ss046).